Consider the following 348-residue polypeptide: Mannonate dehydratase (348 aa).

Belongs to the mannonate dehydratase family. It depends on Fe(2+) as a cofactor. The cofactor is Mn(2+).

The catalysed reaction is D-mannonate = 2-dehydro-3-deoxy-D-gluconate + H2O. It functions in the pathway carbohydrate metabolism; pentose and glucuronate interconversion. In terms of biological role, catalyzes the dehydration of D-mannonate. This chain is Mannonate dehydratase, found in Staphylococcus haemolyticus (strain JCSC1435).